The following is a 429-amino-acid chain: Ribosomal RNA small subunit methyltransferase B (429 aa).

Residues 254–260 (CAAPGGK), Asp277, Asp303, and Asp322 contribute to the S-adenosyl-L-methionine site. Cys375 (nucleophile) is an active-site residue.

The protein belongs to the class I-like SAM-binding methyltransferase superfamily. RsmB/NOP family.

It localises to the cytoplasm. The catalysed reaction is cytidine(967) in 16S rRNA + S-adenosyl-L-methionine = 5-methylcytidine(967) in 16S rRNA + S-adenosyl-L-homocysteine + H(+). In terms of biological role, specifically methylates the cytosine at position 967 (m5C967) of 16S rRNA. This is Ribosomal RNA small subunit methyltransferase B from Pectobacterium carotovorum subsp. carotovorum (strain PC1).